The chain runs to 458 residues: NALCN channel auxiliary factor 1 (458 aa).

Residues 40–60 (LSLASLLFFTVLLSDHLWFCA) traverse the membrane as a helical segment. The tract at residues 70–155 (KEHQQQQRQQ…NRGKDDRGKA (86 aa)) is disordered. Residues 75-96 (QQRQQQQQQQQQRQRQQQQQQR) are compositionally biased toward low complexity. Over residues 136–145 (GDGGGGGGKG) the composition is skewed to gly residues. 7 disulfides stabilise this stretch: cysteine 191/cysteine 261, cysteine 226/cysteine 313, cysteine 246/cysteine 261, cysteine 304/cysteine 341, cysteine 324/cysteine 377, cysteine 330/cysteine 376, and cysteine 334/cysteine 361. Asparagine 217 is a glycosylation site (N-linked (GlcNAc...) asparagine). Residues 417 to 437 (LKLCVLVLILLHTVLTASAAQ) form a helical membrane-spanning segment.

It belongs to the NALF family. In terms of assembly, component of the NALCN channel complex. NALCN complex consists of NALCN and auxiliary subunits, UNC79, UNC80 and NACL1. These auxiliary subunits are essential for the NALCN channel function.

The protein resides in the cell membrane. Functionally, auxillary component of the NALCN sodium channel complex, a channel that regulates the resting membrane potential and controls neuronal excitability. This is NALCN channel auxiliary factor 1 from Homo sapiens (Human).